A 513-amino-acid polypeptide reads, in one-letter code: Maturase K (513 aa).

This sequence belongs to the intron maturase 2 family. MatK subfamily.

The protein resides in the plastid. It localises to the chloroplast. Usually encoded in the trnK tRNA gene intron. Probably assists in splicing its own and other chloroplast group II introns. The sequence is that of Maturase K from Cyrilla racemiflora (Swamp titi).